The primary structure comprises 392 residues: Chaperone protein DnaJ (392 aa).

The region spanning 2–67 (DYYDVLGVSK…QKRESYDRYG (66 aa)) is the J domain. The CR-type zinc-finger motif lies at 149-227 (GVEKELLVSG…CRGQGRIKDK (79 aa)). Residues C162, C165, C179, C182, C201, C204, C215, and C218 each contribute to the Zn(2+) site. CXXCXGXG motif repeat units lie at residues 162-169 (CETCLGSG), 179-186 (CDRCKGSG), 201-208 (CPECGGEG), and 215-222 (CSNCRGQG).

It belongs to the DnaJ family. Homodimer. Requires Zn(2+) as cofactor.

It is found in the cytoplasm. Functionally, participates actively in the response to hyperosmotic and heat shock by preventing the aggregation of stress-denatured proteins and by disaggregating proteins, also in an autonomous, DnaK-independent fashion. Unfolded proteins bind initially to DnaJ; upon interaction with the DnaJ-bound protein, DnaK hydrolyzes its bound ATP, resulting in the formation of a stable complex. GrpE releases ADP from DnaK; ATP binding to DnaK triggers the release of the substrate protein, thus completing the reaction cycle. Several rounds of ATP-dependent interactions between DnaJ, DnaK and GrpE are required for fully efficient folding. Also involved, together with DnaK and GrpE, in the DNA replication of plasmids through activation of initiation proteins. The polypeptide is Chaperone protein DnaJ (Chlamydia caviae (strain ATCC VR-813 / DSM 19441 / 03DC25 / GPIC) (Chlamydophila caviae)).